An 836-amino-acid polypeptide reads, in one-letter code: Pentatricopeptide repeat-containing protein At1g79490, mitochondrial (836 aa).

A mitochondrion-targeting transit peptide spans 1–85 (MIRGRTAKVI…QCRSIVRRFC (85 aa)). 12 PPR repeats span residues 204-238 (SDECYVVLFDGLNQGRDFVGIQSLFEEMVQDSSSH), 242-276 (SFNAYNQVIQYLAKAEKLEVAFCCFKKAQESGCKI), 277-311 (DTQTYNNLMMLFLNKGLPYKAFEIYESMEKTDSLL), 312-346 (DGSTYELIIPSLAKSGRLDAAFKLFQQMKERKLRP), 347-381 (SFSVFSSLVDSMGKAGRLDTSMKVYMEMQGFGHRP), 382-416 (SATMFVSLIDSYAKAGKLDTALRLWDEMKKSGFRP), 417-451 (NFGLYTMIIESHAKSGKLEVAMTVFKDMEKAGFLP), 452-486 (TPSTYSCLLEMHAGSGQVDSAMKIYNSMTNAGLRP), 487-521 (GLSSYISLLTLLANKRLVDVAGKILLEMKAMGYSV), 528-555 (VLMIYIKDASVDLALKWLRFMGSSGIKT), 556-590 (NNFIIRQLFESCMKNGLYDSARPLLETLVHSAGKV), and 591-625 (DLVLYTSILAHLVRCQDEDKERQLMSILSATKHKA). A Smr domain is found at 710–786 (LDVRNLSVGA…APGELVMEWF (77 aa)).

The protein belongs to the PPR family. P subfamily.

It localises to the mitochondrion. The chain is Pentatricopeptide repeat-containing protein At1g79490, mitochondrial (EMB2217) from Arabidopsis thaliana (Mouse-ear cress).